Here is a 150-residue protein sequence, read N- to C-terminus: MNLSGIKPPKGQVKTKKRIGRGMGSGHGKTATRGSKGQHAGTGFSQKRGFEGGQMPLHRRLPKRGFKNIFKKQFAIVNLGRLEKLEGNSFTIDTMLQLGLINKVYDGVKVLGTGVLTRKITVEAHHFSKSALEKIQQAGGTAQMIGAETK.

Residues 1–58 (MNLSGIKPPKGQVKTKKRIGRGMGSGHGKTATRGSKGQHAGTGFSQKRGFEGGQMPLH) are disordered.

Belongs to the universal ribosomal protein uL15 family. In terms of assembly, part of the 50S ribosomal subunit.

Functionally, binds to the 23S rRNA. This Solibacter usitatus (strain Ellin6076) protein is Large ribosomal subunit protein uL15.